Reading from the N-terminus, the 406-residue chain is Multifunctional CCA protein (406 aa).

Residues Gly-8 and Arg-11 each contribute to the ATP site. CTP-binding residues include Gly-8 and Arg-11. 2 residues coordinate Mg(2+): Asp-21 and Asp-23. Positions 91, 138, and 141 each coordinate ATP. CTP-binding residues include Arg-91, Arg-138, and Arg-141. The 103-residue stretch at 229-331 folds into the HD domain; sequence TGIHQEMVSD…LELLGRCDAL (103 aa).

This sequence belongs to the tRNA nucleotidyltransferase/poly(A) polymerase family. Bacterial CCA-adding enzyme type 1 subfamily. In terms of assembly, monomer. Can also form homodimers and oligomers. Mg(2+) is required as a cofactor. Ni(2+) serves as cofactor.

It catalyses the reaction a tRNA precursor + 2 CTP + ATP = a tRNA with a 3' CCA end + 3 diphosphate. The catalysed reaction is a tRNA with a 3' CCA end + 2 CTP + ATP = a tRNA with a 3' CCACCA end + 3 diphosphate. In terms of biological role, catalyzes the addition and repair of the essential 3'-terminal CCA sequence in tRNAs without using a nucleic acid template. Adds these three nucleotides in the order of C, C, and A to the tRNA nucleotide-73, using CTP and ATP as substrates and producing inorganic pyrophosphate. tRNA 3'-terminal CCA addition is required both for tRNA processing and repair. Also involved in tRNA surveillance by mediating tandem CCA addition to generate a CCACCA at the 3' terminus of unstable tRNAs. While stable tRNAs receive only 3'-terminal CCA, unstable tRNAs are marked with CCACCA and rapidly degraded. This is Multifunctional CCA protein from Stenotrophomonas maltophilia (strain R551-3).